The sequence spans 118 residues: SPbeta prophage-derived uncharacterized protein YomS (118 aa).

This chain is SPbeta prophage-derived uncharacterized protein YomS (yomS), found in Bacillus subtilis (strain 168).